The primary structure comprises 104 residues: Transcription factor S (104 aa).

Positions 4, 7, 20, 22, 65, 68, 93, and 96 each coordinate Zn(2+). The C4-type zinc finger occupies 4-22; sequence CPKCGAVMFPSEGKFKCQC. The segment at 61-101 adopts a TFIIS-type zinc-finger fold; it reads TRVECPKCGNMEAFWWLQQTRRADESETRFFRCTRCKHTWR.

It belongs to the archaeal RpoM/eukaryotic RPA12/RPB9/RPC11 RNA polymerase family.

Functionally, induces RNA cleavage activity in the RNA polymerase. In its presence, the cleavage activity of the RNA polymerase truncates the RNA back to position +15 in a stepwise manner by releasing mainly dinucleotides from the 3'-end of the nascent RNA. The truncated RNAs are able to continue elongation. Involved in transcriptional proofreading and fidelity. Misincorporation of nucleotides during elongation of transcription leads to arrested elongation complexes which are rescued by TFS-promoted removal of a dinucleotide from the 3'-end. TFS is able to induce a cleavage resynthesis cycle in stalled elongation complexes (resulting from the next missing nucleotide or a reduced incorporation rate of a wrong nucleotide) preventing misincorporation and enabling proofreading in a post-incorporation manner. Pausing of elongation complexes is the main determinant of TFS-induced RNA cleavage. The chain is Transcription factor S from Methanothermobacter thermautotrophicus (strain ATCC 29096 / DSM 1053 / JCM 10044 / NBRC 100330 / Delta H) (Methanobacterium thermoautotrophicum).